Reading from the N-terminus, the 126-residue chain is MLSRLLKCKIHRAVVTHAELHYEGSCAIDGVLMDLAGIREYEEIHVWNVTNGKRFTTYAIRGEDNSGIISVNGGAAHQADVGDLVIIATFGDFTEAEANAHKPRLVYANPDNTVNHTANCIPVQVA.

Ser-25 serves as the catalytic Schiff-base intermediate with substrate; via pyruvic acid. Pyruvic acid (Ser) is present on Ser-25. Thr-57 contributes to the substrate binding site. Catalysis depends on Tyr-58, which acts as the Proton donor. 73-75 (GGA) is a substrate binding site.

The protein belongs to the PanD family. In terms of assembly, heterooctamer of four alpha and four beta subunits. The cofactor is pyruvate. Post-translationally, is synthesized initially as an inactive proenzyme, which is activated by self-cleavage at a specific serine bond to produce a beta-subunit with a hydroxyl group at its C-terminus and an alpha-subunit with a pyruvoyl group at its N-terminus.

Its subcellular location is the cytoplasm. The catalysed reaction is L-aspartate + H(+) = beta-alanine + CO2. It participates in cofactor biosynthesis; (R)-pantothenate biosynthesis; beta-alanine from L-aspartate: step 1/1. Its function is as follows. Catalyzes the pyruvoyl-dependent decarboxylation of aspartate to produce beta-alanine. The sequence is that of Aspartate 1-decarboxylase from Acinetobacter baumannii (strain ACICU).